Consider the following 1077-residue polypeptide: Deoxyribonuclease CdiA (1077 aa).

An FHA-2 region spans residues 67–384; it reads IGTSRQKTTD…DRDNYDAKQS (318 aa). Polar residues predominate over residues 531–546; it reads QQNVDDLSRDTGNANG. The disordered stretch occupies residues 531–555; it reads QQNVDDLSRDTGNANGSIGPIFDKE. Residues 781 to 784 carry the VENN CT cleavage motif motif; the sequence is VENN. Residues 954–1077 form a DNase activity region; sequence MPWEDYVGKT…GVKVTVTQVK (124 aa).

Interacts with cognate immunity protein CdiI-YPIII, which blocks its toxic DNase activity. The cofactor is Zn(2+).

The protein resides in the target cell. It localises to the target cell cytoplasm. Toxic component of a toxin-immunity protein module, which functions as a cellular contact-dependent growth inhibition (CDI) system. CDI modules allow bacteria to communicate with and inhibit the growth of closely related neighboring bacteria in a contact-dependent fashion. The C-terminal 123 residues (954-1077) has DNase activity in the presence of Zn(2+), converting supercoiled DNA into open-circular form. Toxic activity is neutralized by coexpression of the cognate immunity protein CdiI-YPIII, but not by non-cognate immunity proteins from other toxin-immunity modules. Expression of the DNase domain as a chimera allows bacteria to attack other non-immune bacteria which become filamentous and have lost DNA staining. Its function is as follows. The CdiA protein is thought to be exported from the cell through the central lumen of CdiB, the other half of its two-partner system (TPS). The TPS domain probably remains associated with CdiB while the FHA-1 domain forms an extended filament with the receptor-binding domain (RBD) at its extremity; in the secretion arrested state the C-terminus of the RBD and YP domains form a hairpin-like structure as the FHA-2, PT and CT domains are periplasmic. The YP domain is probably responsible for this arrest at the point where it re-enters the host cell periplasm. Upon binding to a target cell outer membrane receptor a signal is transmitted to activate secretion. The filament elongates slightly, the rest of CdiA is secreted and the FHA-2 domain becomes stably associated with the target cell's outer membrane where it facilitates entry of the toxic CT domain into the target cell periplasm. From there the toxic CT domain is cleaved and gains access to the target cell cytoplasm via an inner membrane protein. This is Deoxyribonuclease CdiA from Yersinia pseudotuberculosis serotype O:3 (strain YPIII).